Reading from the N-terminus, the 356-residue chain is Guanine nucleotide-binding protein alpha-2 subunit (356 aa).

Residue Gly2 is the site of N-myristoyl glycine attachment. Cys4 carries the S-palmitoyl cysteine lipid modification. In terms of domain architecture, G-alpha spans 32–356 (RTVKLLLLGA…QSNLHKSGLY (325 aa)). Positions 35 to 48 (KLLLLGAGECGKST) are G1 motif. Glu43, Gly45, Lys46, Ser47, Thr48, Asp153, Leu178, Thr184, Gly206, Asn272, Lys273, Asp275, and Ala328 together coordinate GTP. Position 47 (Ser47) interacts with Mg(2+). The G2 motif stretch occupies residues 176–184 (DTLLLRTKT). A Mg(2+)-binding site is contributed by Thr184. A G3 motif region spans residues 199 to 208 (FRVFDVGGQR). Residues 268 to 275 (ILFLNKKD) form a G4 motif region. Residues 326–331 (TCATDT) form a G5 motif region.

The protein belongs to the G-alpha family. G(q) subfamily. As to quaternary structure, g proteins are composed of 3 units; alpha, beta and gamma. The alpha chain contains the guanine nucleotide binding site. It depends on Mg(2+) as a cofactor.

In terms of biological role, guanine nucleotide-binding proteins (G proteins) are involved as modulators or transducers in various transmembrane signaling systems. Involved in behavioral responses to P.aeruginosa by controlling the expression of daf-7, a member of the TGF-beta family, in ASJ sensory neurons. The sequence is that of Guanine nucleotide-binding protein alpha-2 subunit (gpa-2) from Caenorhabditis elegans.